The following is a 369-amino-acid chain: uncharacterized protein (369 aa).

9 helical membrane-spanning segments follow: residues Gln25–Trp45, Phe47–Glu67, Leu119–Met139, Ile152–Leu172, Gly206–Ile226, Leu235–Leu255, Leu268–Ile288, Leu295–Phe315, and Trp323–Phe343.

It to B.subtilis ComEC.

Its subcellular location is the cell membrane. This is an uncharacterized protein from Mycoplasma pneumoniae (strain ATCC 29342 / M129 / Subtype 1) (Mycoplasmoides pneumoniae).